The following is a 142-amino-acid chain: Small ribosomal subunit protein uS12 (142 aa).

Residues Met1–Gln44 form a disordered region. The segment covering Leu11 to Leu32 has biased composition (basic and acidic residues).

This sequence belongs to the universal ribosomal protein uS12 family. Part of the 30S ribosomal subunit.

In terms of biological role, with S4 and S5 plays an important role in translational accuracy. Located at the interface of the 30S and 50S subunits. This chain is Small ribosomal subunit protein uS12, found in Haloquadratum walsbyi (strain DSM 16790 / HBSQ001).